A 216-amino-acid chain; its full sequence is Small ribosomal subunit protein uS3c (216 aa).

The KH type-2 domain maps to 43–118 (INNYVKKNMR…KLNITITRIE (76 aa)).

This sequence belongs to the universal ribosomal protein uS3 family. As to quaternary structure, part of the 30S ribosomal subunit.

The protein localises to the plastid. The chain is Small ribosomal subunit protein uS3c (rps3) from Cuscuta reflexa (Southern Asian dodder).